An 819-amino-acid chain; its full sequence is Myosin light chain kinase 3 (819 aa).

Disordered regions lie at residues 146 to 256 (VPWR…TPSE), 273 to 334 (VVSP…TPPR), and 347 to 462 (EMLM…EQDC). At serine 152 the chain carries Phosphoserine. Basic and acidic residues-rich tracts occupy residues 158-170 (EENKERVEEEGGK) and 183-196 (DAREPGEESQKADV). Positions 307-318 (GPGPQCPGPPGL) are enriched in pro residues. A phosphoserine mark is found at serine 355, serine 401, and serine 408. In terms of domain architecture, Protein kinase spans 515–770 (VCQHEVLGGG…ATQCLKHEWL (256 aa)). Residues 521–529 (LGGGRFGQV) and lysine 544 each bind ATP. The active-site Proton acceptor is aspartate 636.

This sequence belongs to the protein kinase superfamily. CAMK Ser/Thr protein kinase family. The cofactor is Mg(2+). Phosphorylated on serine residues. In terms of tissue distribution, restricted to heart.

The protein resides in the cytoplasm. The enzyme catalyses L-seryl-[myosin light chain] + ATP = O-phospho-L-seryl-[myosin light chain] + ADP + H(+). It catalyses the reaction L-threonyl-[myosin light chain] + ATP = O-phospho-L-threonyl-[myosin light chain] + ADP + H(+). Its function is as follows. Kinase that phosphorylates MYL2 in vitro. Promotes sarcomere formation in cardiomyocytes and increases cardiomyocyte contractility. This is Myosin light chain kinase 3 (MYLK3) from Homo sapiens (Human).